The following is a 351-amino-acid chain: MSGLIAYCRQGFEPELAAELRDRAVLLGIASDIHAQRNHGFVLLRCDPLHVDTLLQQLHWRRLIFARQTLRLHAELKTLNSRDRIAPILAALPKTPCFGDLWIEYPDSDMGKPLAGLARSFGNALRPVLRSAGRLSAQLHPQWPRLHVCFLSGDHVLLGSTRSVDSAPWQLGIPRLKLLPEAPSRSALKLEEALITLLTPNEREAKLRPGMCATDLGAAPGGWTWVLICQHLRVTSIDNAALRPPLLNHPLVQHVRADGFRWIPPRPMDWMVCDMVEQPRRVAERMAVWLREGWCRHMIFNLKLPMKKRWDETRLCLERFETQAAVPLTLRAKQLYHDREEITVYASNDAR.

Residues serine 186, 219–222 (APGG), aspartate 238, aspartate 258, and aspartate 274 contribute to the S-adenosyl-L-methionine site. Lysine 303 serves as the catalytic Proton acceptor.

This sequence belongs to the class I-like SAM-binding methyltransferase superfamily. RNA methyltransferase RlmE family. RlmM subfamily. Monomer.

The protein localises to the cytoplasm. It catalyses the reaction cytidine(2498) in 23S rRNA + S-adenosyl-L-methionine = 2'-O-methylcytidine(2498) in 23S rRNA + S-adenosyl-L-homocysteine + H(+). In terms of biological role, catalyzes the 2'-O-methylation at nucleotide C2498 in 23S rRNA. The polypeptide is Ribosomal RNA large subunit methyltransferase M (Xylella fastidiosa (strain M23)).